A 312-amino-acid polypeptide reads, in one-letter code: Porphobilinogen deaminase (312 aa).

Cysteine 243 is subject to S-(dipyrrolylmethanemethyl)cysteine.

This sequence belongs to the HMBS family. In terms of assembly, monomer. The cofactor is dipyrromethane.

It catalyses the reaction 4 porphobilinogen + H2O = hydroxymethylbilane + 4 NH4(+). The protein operates within porphyrin-containing compound metabolism; protoporphyrin-IX biosynthesis; coproporphyrinogen-III from 5-aminolevulinate: step 2/4. In terms of biological role, tetrapolymerization of the monopyrrole PBG into the hydroxymethylbilane pre-uroporphyrinogen in several discrete steps. The polypeptide is Porphobilinogen deaminase (Vibrio parahaemolyticus serotype O3:K6 (strain RIMD 2210633)).